A 143-amino-acid polypeptide reads, in one-letter code: MLSHPMKLLFFVFALSALLAAATPVVEVRDYQQFSRVSLINFISFNKARGGDLCANGKKTMCCGELKTFDKNILGLLDGLLTTVVGLAGEILKPTGLVGLECVPITLLGNGGLSDVCKANGVCCKDLTLRAAINVGCVPINIL.

An N-terminal signal peptide occupies residues 1–22 (MLSHPMKLLFFVFALSALLAAA). Intrachain disulfides connect cysteine 54–cysteine 123, cysteine 62–cysteine 117, cysteine 63–cysteine 102, and cysteine 124–cysteine 137.

The protein belongs to the fungal hydrophobin family. Self-assembles to form functional amyloid fibrils called rodlets. Self-assembly into fibrillar rodlets occurs spontaneously at hydrophobic:hydrophilic interfaces and the rodlets further associate laterally to form amphipathic monolayers.

Its subcellular location is the secreted. It is found in the cell wall. In terms of biological role, aerial growth, conidiation, and dispersal of filamentous fungi in the environment rely upon a capability of their secreting small amphipathic proteins called hydrophobins (HPBs) with low sequence identity. Class I can self-assemble into an outermost layer of rodlet bundles on aerial cell surfaces, conferring cellular hydrophobicity that supports fungal growth, development and dispersal; whereas Class II form highly ordered films at water-air interfaces through intermolecular interactions but contribute nothing to the rodlet structure. Hydph20 is a class I hydrophobin involved in mycelial growth. The polypeptide is Class I hydrophobin 20 (Pleurotus ostreatus (strain PC15) (Oyster mushroom)).